A 316-amino-acid polypeptide reads, in one-letter code: Small ribosomal subunit protein mS26 (316 aa).

Residues 41 to 71 form a disordered region; that stretch reads TTRSARDSVSIPPDSPNYIKVPEPPQSSEVR.

This sequence belongs to the mitochondrion-specific ribosomal protein mS26 family. Component of the mitochondrial small ribosomal subunit (mt-SSU). Mature N.crassa 74S mitochondrial ribosomes consist of a small (37S) and a large (54S) subunit. The 37S small subunit contains a 16S ribosomal RNA (16S mt-rRNA) and 32 different proteins. The 54S large subunit contains a 23S rRNA (23S mt-rRNA) and 42 different proteins.

The protein localises to the mitochondrion. Component of the mitochondrial ribosome (mitoribosome), a dedicated translation machinery responsible for the synthesis of mitochondrial genome-encoded proteins, including at least some of the essential transmembrane subunits of the mitochondrial respiratory chain. The mitoribosomes are attached to the mitochondrial inner membrane and translation products are cotranslationally integrated into the membrane. The protein is Small ribosomal subunit protein mS26 (pet123) of Neurospora crassa (strain ATCC 24698 / 74-OR23-1A / CBS 708.71 / DSM 1257 / FGSC 987).